Here is a 573-residue protein sequence, read N- to C-terminus: WRKY transcription factor SUSIBA2 (573 aa).

2 disordered regions span residues 56 to 133 (AHPD…CSRE) and 157 to 192 (PAEV…DDGY). Residues 64 to 85 (PRDKSVRNAHEDRGSRDFEFKP) are compositionally biased toward basic and acidic residues. A compositionally biased stretch (low complexity) spans 108-122 (MQNQSMNPSSSSSNM). The span at 163–182 (SEPQQMNSSDNAMQEPQSEN) shows a compositional bias: polar residues. Residues 183-192 (VADKSADDGY) are compositionally biased toward basic and acidic residues. Positions 183–247 (VADKSADDGY…YKGRHNHPKP (65 aa)) form a DNA-binding region, WRKY 1. Cys-214, Cys-219, His-242, and His-244 together coordinate Zn(2+). The disordered stretch occupies residues 240-332 (GRHNHPKPQP…EDLESKRRKM (93 aa)). Residues 263–277 (GEERYDGASAADDKS) show a composition bias toward basic and acidic residues. The WRKY 2 DNA-binding region spans 357-422 (SEVDILDDGY…YEGKHNHEVP (66 aa)). Zn(2+)-binding residues include Cys-388, Cys-393, His-417, and His-419.

The protein belongs to the WRKY group I family. As to expression, expressed in endosperm, but not in leaves.

Its subcellular location is the nucleus. Its function is as follows. Transcription factor involved in starch synthesis. Acts as a transcriptional activator in sugar signaling. Interacts specifically with the SURE and W-box elements, but not with the SP8a element. This Hordeum vulgare (Barley) protein is WRKY transcription factor SUSIBA2.